The sequence spans 275 residues: Shikimate dehydrogenase (NADP(+)) (275 aa).

Residues 16–18 (SKS) and Thr-63 contribute to the shikimate site. The active-site Proton acceptor is the Lys-67. Shikimate-binding residues include Asn-88 and Asp-104. NADP(+) is bound by residues 129–133 (GAGGA), 153–158 (NRTVAR), and Met-219. Tyr-221 contacts shikimate. Gly-243 serves as a coordination point for NADP(+).

Belongs to the shikimate dehydrogenase family. Homodimer.

The enzyme catalyses shikimate + NADP(+) = 3-dehydroshikimate + NADPH + H(+). Its pathway is metabolic intermediate biosynthesis; chorismate biosynthesis; chorismate from D-erythrose 4-phosphate and phosphoenolpyruvate: step 4/7. In terms of biological role, involved in the biosynthesis of the chorismate, which leads to the biosynthesis of aromatic amino acids. Catalyzes the reversible NADPH linked reduction of 3-dehydroshikimate (DHSA) to yield shikimate (SA). The sequence is that of Shikimate dehydrogenase (NADP(+)) from Marinobacter nauticus (strain ATCC 700491 / DSM 11845 / VT8) (Marinobacter aquaeolei).